Consider the following 548-residue polypeptide: Lysine--tRNA ligase (548 aa).

The 'HIGH' region signature appears at 52–60; it reads PSGLPHIGT. The 'KMSKS' region motif lies at 300-304; sequence KISKS. Lys-303 contacts ATP.

It belongs to the class-I aminoacyl-tRNA synthetase family.

The protein resides in the cytoplasm. It catalyses the reaction tRNA(Lys) + L-lysine + ATP = L-lysyl-tRNA(Lys) + AMP + diphosphate. The protein is Lysine--tRNA ligase of Mesorhizobium japonicum (strain LMG 29417 / CECT 9101 / MAFF 303099) (Mesorhizobium loti (strain MAFF 303099)).